Reading from the N-terminus, the 213-residue chain is Nucleoside triphosphate pyrophosphatase (213 aa).

Asp-79 acts as the Proton acceptor in catalysis.

This sequence belongs to the Maf family. A divalent metal cation serves as cofactor.

It is found in the cytoplasm. It catalyses the reaction a ribonucleoside 5'-triphosphate + H2O = a ribonucleoside 5'-phosphate + diphosphate + H(+). It carries out the reaction a 2'-deoxyribonucleoside 5'-triphosphate + H2O = a 2'-deoxyribonucleoside 5'-phosphate + diphosphate + H(+). Nucleoside triphosphate pyrophosphatase. May have a dual role in cell division arrest and in preventing the incorporation of modified nucleotides into cellular nucleic acids. This is Nucleoside triphosphate pyrophosphatase from Mycobacterium leprae (strain Br4923).